Here is a 284-residue protein sequence, read N- to C-terminus: Hypoxanthine-guanine phosphoribosyltransferase (284 aa).

GMP contacts are provided by residues lysine 129, glutamate 194 to threonine 202, lysine 226, and aspartate 253. The active-site Proton acceptor is aspartate 198. A Mg(2+)-binding site is contributed by aspartate 253.

The protein belongs to the purine/pyrimidine phosphoribosyltransferase family. As to quaternary structure, homotetramer. Mg(2+) is required as a cofactor.

Its subcellular location is the cytoplasm. The enzyme catalyses IMP + diphosphate = hypoxanthine + 5-phospho-alpha-D-ribose 1-diphosphate. It catalyses the reaction GMP + diphosphate = guanine + 5-phospho-alpha-D-ribose 1-diphosphate. The protein operates within purine metabolism; IMP biosynthesis via salvage pathway; IMP from hypoxanthine: step 1/1. Converts guanine to guanosine monophosphate, and hypoxanthine to inosine monophosphate. Transfers the 5-phosphoribosyl group from 5-phosphoribosylpyrophosphate onto the purine. Plays a central role in the generation of purine nucleotides through the purine salvage pathway. The protein is Hypoxanthine-guanine phosphoribosyltransferase (HGPRT) of Schistosoma mansoni (Blood fluke).